We begin with the raw amino-acid sequence, 205 residues long: Small ribosomal subunit protein uS3c (205 aa).

Residues 37-106 enclose the KH type-2 domain; sequence IRQLLRDYVL…TWRISLVEVS (70 aa).

Belongs to the universal ribosomal protein uS3 family. In terms of assembly, part of the 30S ribosomal subunit.

The protein resides in the plastid. The protein localises to the chloroplast. The protein is Small ribosomal subunit protein uS3c (rps3) of Cyanidioschyzon merolae (strain NIES-3377 / 10D) (Unicellular red alga).